Here is an 86-residue protein sequence, read N- to C-terminus: Exodeoxyribonuclease 7 small subunit (86 aa).

The tract at residues 64–86 (SNPETVQDKTDTDEPDSNEFSLT) is disordered.

It belongs to the XseB family. In terms of assembly, heterooligomer composed of large and small subunits.

The protein resides in the cytoplasm. The enzyme catalyses Exonucleolytic cleavage in either 5'- to 3'- or 3'- to 5'-direction to yield nucleoside 5'-phosphates.. Bidirectionally degrades single-stranded DNA into large acid-insoluble oligonucleotides, which are then degraded further into small acid-soluble oligonucleotides. This Akkermansia muciniphila (strain ATCC BAA-835 / DSM 22959 / JCM 33894 / BCRC 81048 / CCUG 64013 / CIP 107961 / Muc) protein is Exodeoxyribonuclease 7 small subunit.